A 159-amino-acid polypeptide reads, in one-letter code: G-protein-signaling modulator 3 (159 aa).

The disordered stretch occupies residues 1–54 (MEAERPQEEDGEQSLPQDDQGWPPVNATARPWRSAPPSPPPPGTRHTALGPRSG). A phosphoserine mark is found at serine 34, serine 38, serine 55, and serine 58. The segment covering 34 to 43 (SAPPSPPPPG) has biased composition (pro residues). Phosphothreonine is present on threonine 61. The region spanning 61-83 (TELLLDLVAEAQSRRLEEQRATF) is the GoLoco 1 domain. Residues 77–97 (EEQRATFHTPEAPPNLAPAPP) form a disordered region. Pro residues predominate over residues 87 to 97 (EAPPNLAPAPP). GoLoco domains follow at residues 103–125 (KEQL…RSDP) and 131–154 (GQEL…RSRP).

The protein localises to the cytoplasm. Interacts with subunit of G(i) alpha proteins and regulates the activation of G(i) alpha proteins. The sequence is that of G-protein-signaling modulator 3 (Gpsm3) from Mus musculus (Mouse).